The following is a 227-amino-acid chain: Probable septum site-determining protein MinC (227 aa).

It belongs to the MinC family. Interacts with MinD and FtsZ.

Its function is as follows. Cell division inhibitor that blocks the formation of polar Z ring septums. Rapidly oscillates between the poles of the cell to destabilize FtsZ filaments that have formed before they mature into polar Z rings. Prevents FtsZ polymerization. The chain is Probable septum site-determining protein MinC from Geobacillus kaustophilus (strain HTA426).